The following is a 197-amino-acid chain: Ribosome maturation factor RimM (197 aa).

Positions 99–174 (EDEFYQVDLI…LVVEPVAAGL (76 aa)) constitute a PRC barrel domain.

Belongs to the RimM family. Binds ribosomal protein uS19.

It localises to the cytoplasm. Its function is as follows. An accessory protein needed during the final step in the assembly of 30S ribosomal subunit, possibly for assembly of the head region. Essential for efficient processing of 16S rRNA. May be needed both before and after RbfA during the maturation of 16S rRNA. It has affinity for free ribosomal 30S subunits but not for 70S ribosomes. This Bartonella quintana (strain Toulouse) (Rochalimaea quintana) protein is Ribosome maturation factor RimM.